The following is a 269-amino-acid chain: NAD kinase (269 aa).

Aspartate 45 acts as the Proton acceptor in catalysis. NAD(+) is bound by residues 45-46 (DG), 122-123 (NE), arginine 149, aspartate 151, and alanine 186.

It belongs to the NAD kinase family. Requires a divalent metal cation as cofactor.

It is found in the cytoplasm. The enzyme catalyses NAD(+) + ATP = ADP + NADP(+) + H(+). Functionally, involved in the regulation of the intracellular balance of NAD and NADP, and is a key enzyme in the biosynthesis of NADP. Catalyzes specifically the phosphorylation on 2'-hydroxyl of the adenosine moiety of NAD to yield NADP. This chain is NAD kinase, found in Staphylococcus epidermidis (strain ATCC 35984 / DSM 28319 / BCRC 17069 / CCUG 31568 / BM 3577 / RP62A).